We begin with the raw amino-acid sequence, 486 residues long: UDP-N-acetylmuramoyl-L-alanyl-D-glutamate--2,6-diaminopimelate ligase (486 aa).

S31 serves as a coordination point for UDP-N-acetyl-alpha-D-muramoyl-L-alanyl-D-glutamate. 109–115 (GTNGKTT) provides a ligand contact to ATP. Residues N150, 151–152 (TT), S178, and R186 each bind UDP-N-acetyl-alpha-D-muramoyl-L-alanyl-D-glutamate. K218 bears the N6-carboxylysine mark. Residues R381, 405–408 (DNPR), G455, and E459 each bind meso-2,6-diaminopimelate. The Meso-diaminopimelate recognition motif motif lies at 405 to 408 (DNPR).

It belongs to the MurCDEF family. MurE subfamily. It depends on Mg(2+) as a cofactor. Post-translationally, carboxylation is probably crucial for Mg(2+) binding and, consequently, for the gamma-phosphate positioning of ATP.

It localises to the cytoplasm. The enzyme catalyses UDP-N-acetyl-alpha-D-muramoyl-L-alanyl-D-glutamate + meso-2,6-diaminopimelate + ATP = UDP-N-acetyl-alpha-D-muramoyl-L-alanyl-gamma-D-glutamyl-meso-2,6-diaminopimelate + ADP + phosphate + H(+). Its pathway is cell wall biogenesis; peptidoglycan biosynthesis. In terms of biological role, catalyzes the addition of meso-diaminopimelic acid to the nucleotide precursor UDP-N-acetylmuramoyl-L-alanyl-D-glutamate (UMAG) in the biosynthesis of bacterial cell-wall peptidoglycan. The chain is UDP-N-acetylmuramoyl-L-alanyl-D-glutamate--2,6-diaminopimelate ligase from Halalkalibacterium halodurans (strain ATCC BAA-125 / DSM 18197 / FERM 7344 / JCM 9153 / C-125) (Bacillus halodurans).